A 407-amino-acid chain; its full sequence is Putative membrane protein 047R (407 aa).

Residues 265–337 (INCVFKPDPP…PPKPTPPPPI (73 aa)) are disordered. Residues 271 to 337 (PDPPPQPKPQ…PPKPTPPPPI (67 aa)) show a composition bias toward pro residues. 2 helical membrane-spanning segments follow: residues 355 to 372 (NWIM…VIYP) and 385 to 403 (NAAI…QSYV).

The protein belongs to the IIV-6 337L family.

Its subcellular location is the virion membrane. The polypeptide is Putative membrane protein 047R (Aedes vexans (Inland floodwater mosquito)).